A 327-amino-acid chain; its full sequence is GTPase Obg (327 aa).

In terms of domain architecture, Obg spans 1-159 (MQFIDQANII…WEVQLELKLL (159 aa)). An OBG-type G domain is found at 160 to 327 (AEVGIIGLPN…PLLSEVWKRI (168 aa)). Residues 166–173 (GLPNAGKS), 191–195 (FTTLI), 213–216 (DIPG), 280–283 (NKME), and 309–311 (SSS) each bind ATP. Residues Ser173 and Thr193 each coordinate Mg(2+).

This sequence belongs to the TRAFAC class OBG-HflX-like GTPase superfamily. OBG GTPase family. Monomer. Mg(2+) serves as cofactor.

It localises to the cytoplasm. Functionally, an essential GTPase which binds GTP, GDP and possibly (p)ppGpp with moderate affinity, with high nucleotide exchange rates and a fairly low GTP hydrolysis rate. Plays a role in control of the cell cycle, stress response, ribosome biogenesis and in those bacteria that undergo differentiation, in morphogenesis control. The protein is GTPase Obg of Prochlorococcus marinus subsp. pastoris (strain CCMP1986 / NIES-2087 / MED4).